A 968-amino-acid polypeptide reads, in one-letter code: MPFSLGQRWISDTESELGLGTVVGVEGRMVTVLFPATGENRLFSRTEAPLTRVIYNPGDTVESHEEWKLTVTEVEEKDSLIIYHGTHSETGEQVSLRETLLNHNIRFNKPQDRLFAGQIDRLDRFNVRYQCQLLRNKLATSDLLGLQGPRVGLIPHQQWIAHEVGQRFAPRVLLADEVGLGKTIEAGLIIHQQLLTGRAERILVIVPDTLRHQWLVEMLRRFNLRFSVFDEDRCVEAYADHDNPFYTEQLVICSLDLLRKKRRLDQALDADWDLMVVDEAHHLEWSEEAPSRAYQIVEALSEEIPGVLLLTATPDQLGHQSHFARLRLLDPDRFYDYEAFLKEEDSYKDVATAADALASGEILSDESIAGLTQLLAEKDISASITLIQDDAADADSRFQARDELLQDLLDRHGTGRVLYRNSRASVKGFPVRNLHVHPQKMPEQYVTAYRVSSMMNKHLDTNAKVRQVLSPEKIYQDFDSGSAAWWKFDPRVDWLIDFLKNNRSKKVLIIASQAETALSLEEALRTREGIQATVFHEGMSIIERDKAGAYFAQESGGAQALICSEIGSEGRNFQFASNLVLFDLPLNPDLLEQRIGRLDRIGQKNDVEIHLPFLANTAQERLMQWYHQGLNAFECTCPSGHILFNEFSGELLESLLNNDEAVLESLLDGTKARYQELKVAMEQGRDKLLEINSHGGERANQLVKTLADKDEDTQLIGSVIRLWDIIGVEQEDSGENAIVLHPSEHMMFPTYPGLPEDGITVTFDREMALSRDDIALITQEHPLVQTGLDLITSSETGTTSVAVLKNKALPAGTIFLELIYLADASAPKSSQLYRYLPPTPIRVLLDKNGNNLSDNVTYESFNKQLSAVNRHIASKLVNASQAILHPLFAKAESFATTQLETLTECAREKMTSQLSGELERLKALKAVNPNIRDEELSHLSEQMAELNRYLDSSQLQLDAIRLVLVSHA.

The 170-residue stretch at 163–332 folds into the Helicase ATP-binding domain; the sequence is EVGQRFAPRV…FARLRLLDPD (170 aa). 176 to 183 serves as a coordination point for ATP; it reads DEVGLGKT. The DEAH box signature appears at 278-281; that stretch reads DEAH. The 188-residue stretch at 491 to 678 folds into the Helicase C-terminal domain; that stretch reads RVDWLIDFLK…GTKARYQELK (188 aa).

The protein belongs to the SNF2/RAD54 helicase family. RapA subfamily. Interacts with the RNAP. Has a higher affinity for the core RNAP than for the holoenzyme. Its ATPase activity is stimulated by binding to RNAP.

In terms of biological role, transcription regulator that activates transcription by stimulating RNA polymerase (RNAP) recycling in case of stress conditions such as supercoiled DNA or high salt concentrations. Probably acts by releasing the RNAP, when it is trapped or immobilized on tightly supercoiled DNA. Does not activate transcription on linear DNA. Probably not involved in DNA repair. The chain is RNA polymerase-associated protein RapA from Shewanella pealeana (strain ATCC 700345 / ANG-SQ1).